Here is a 652-residue protein sequence, read N- to C-terminus: Iron-regulated outer membrane virulence protein (652 aa).

Residues 1–25 (MSRFNPSPVSLSVTLGLMFSASAFA) form the signal peptide. The short motif at 33-40 (ETMVVTAA) is the TonB box element. A TBDR plug domain is found at 45-162 (VIQNAPASIS…IGGVINIITR (118 aa)). The 486-residue stretch at 167-652 (QWSGNVQLST…RYWLGLDIAF (486 aa)) folds into the TBDR beta-barrel domain. Positions 635–652 (YGYVEDGRRYWLGLDIAF) match the TonB C-terminal box motif.

This sequence belongs to the TonB-dependent receptor family.

The protein resides in the cell outer membrane. Functionally, involved in the initial step of iron uptake by binding ferric vibriobactin, an iron chelatin siderophore that allows V.cholerae to extract iron from the environment. This is Iron-regulated outer membrane virulence protein (irgA) from Vibrio cholerae serotype O1 (strain ATCC 39541 / Classical Ogawa 395 / O395).